The sequence spans 1047 residues: Probable sucrose-phosphate synthase 2 (1047 aa).

Basic and acidic residues predominate over residues 101-123 (EGKNAKREAKREREREKARREVT). Positions 101–153 (EGKNAKREAKREREREKARREVTAEMSEDFSEGEKADLPGEIPTPSDNNTKGR) are disordered. Phosphoserine occurs at positions 127, 131, and 159. The segment at 712–731 (KSGSNNGVDTNLDAEDRAAE) is disordered.

This sequence belongs to the glycosyltransferase 1 family. Homodimer or homotetramer. In terms of tissue distribution, expressed in roots, cauline leaves, flower buds, flowers and anthers. Highly expressed in maturing nectaries.

The enzyme catalyses beta-D-fructose 6-phosphate + UDP-alpha-D-glucose = sucrose 6(F)-phosphate + UDP + H(+). It participates in glycan biosynthesis; sucrose biosynthesis; sucrose from D-fructose 6-phosphate and UDP-alpha-D-glucose: step 1/2. With respect to regulation, activity is regulated by phosphorylation and moderated by concentration of metabolites and light. Functionally, plays a role in photosynthetic sucrose synthesis by catalyzing the rate-limiting step of sucrose biosynthesis from UDP-glucose and fructose- 6-phosphate. Involved in the regulation of carbon partitioning in the leaves of plants. May regulate the synthesis of sucrose and therefore play a major role as a limiting factor in the export of photoassimilates out of the leaf. Plays a role for sucrose availability that is essential for plant growth and fiber elongation. Required for nectar secretion. This is Probable sucrose-phosphate synthase 2 (SPS2) from Arabidopsis thaliana (Mouse-ear cress).